Reading from the N-terminus, the 157-residue chain is 2-C-methyl-D-erythritol 2,4-cyclodiphosphate synthase (157 aa).

2 residues coordinate a divalent metal cation: Asp-8 and His-10. 4-CDP-2-C-methyl-D-erythritol 2-phosphate-binding positions include 8-10 and 34-35; these read DVH and HS. A divalent metal cation is bound at residue His-42. 4-CDP-2-C-methyl-D-erythritol 2-phosphate contacts are provided by residues 56–58, 61–65, 100–106, 132–135, and Phe-139; these read DIG, FPDTD, AQKPKMA, and TTEE.

Belongs to the IspF family. In terms of assembly, homotrimer. Requires a divalent metal cation as cofactor.

The catalysed reaction is 4-CDP-2-C-methyl-D-erythritol 2-phosphate = 2-C-methyl-D-erythritol 2,4-cyclic diphosphate + CMP. The protein operates within isoprenoid biosynthesis; isopentenyl diphosphate biosynthesis via DXP pathway; isopentenyl diphosphate from 1-deoxy-D-xylulose 5-phosphate: step 4/6. Involved in the biosynthesis of isopentenyl diphosphate (IPP) and dimethylallyl diphosphate (DMAPP), two major building blocks of isoprenoid compounds. Catalyzes the conversion of 4-diphosphocytidyl-2-C-methyl-D-erythritol 2-phosphate (CDP-ME2P) to 2-C-methyl-D-erythritol 2,4-cyclodiphosphate (ME-CPP) with a corresponding release of cytidine 5-monophosphate (CMP). The chain is 2-C-methyl-D-erythritol 2,4-cyclodiphosphate synthase from Clostridium novyi (strain NT).